The chain runs to 140 residues: Small ribosomal subunit protein uS19 (140 aa).

This sequence belongs to the universal ribosomal protein uS19 family.

Its function is as follows. Protein S19 forms a complex with S13 that binds strongly to the 16S ribosomal RNA. This Sulfolobus acidocaldarius (strain ATCC 33909 / DSM 639 / JCM 8929 / NBRC 15157 / NCIMB 11770) protein is Small ribosomal subunit protein uS19.